The following is a 39-amino-acid chain: Mu-like prophage FluMu protein com (39 aa).

It belongs to the com family.

This chain is Mu-like prophage FluMu protein com, found in Haemophilus influenzae (strain ATCC 51907 / DSM 11121 / KW20 / Rd).